We begin with the raw amino-acid sequence, 199 residues long: DnaJ homolog subfamily C member 5B (199 aa).

Phosphoserine occurs at positions 14 and 16. A J domain is found at 19 to 84 (ALYEILGLHK…SKRNIYDKYG (66 aa)).

In terms of assembly, interacts with the chaperone complex consisting of HSC70 and SGTA. Palmitoylated.

Its subcellular location is the membrane. The chain is DnaJ homolog subfamily C member 5B (DNAJC5B) from Sus scrofa (Pig).